Consider the following 349-residue polypeptide: Protein AMBP (349 aa).

The N-terminal stretch at 1-19 (MQGLGALFLLLTACLTLKA) is a signal peptide. Positions 52 and 110 each coordinate 3-hydroxy-L-kynurenine. Cys-90 and Cys-187 form a disulfide bridge. N-linked (GlcNAc...) asparagine glycosylation is present at Asn-114. Lys-136 and Lys-148 together coordinate 3-hydroxy-L-kynurenine. An O-linked (Xyl...) (chondroitin sulfate) serine glycan is attached at Ser-214. Intrachain disulfides connect Cys-230/Cys-280, Cys-239/Cys-263, Cys-255/Cys-276, Cys-286/Cys-336, Cys-295/Cys-319, and Cys-311/Cys-332. BPTI/Kunitz inhibitor domains lie at 230-280 (CQLN…LQTC) and 286-336 (CNLP…KEYC). Asn-233 carries N-linked (GlcNAc...) asparagine glycosylation.

It in the N-terminal section; belongs to the calycin superfamily. Lipocalin family. In terms of assembly, monomer. Homodimer. In plasma, it occurs as a monomer or dimer and in covalently-linked complexes with immunoglobulin A (IgA), ALB/albumin and F2/prothrombin. Chromophore-bound alpha-1-microglobulin interacts with the constant region of immunoglobulin A. Chromophore-bound alpha-1-microglobulin interacts with ALB with molar ratio 2:1 and 1:1; this interaction does not prevent fatty acid binding to ALB. Interacts with F2/prothrombin (via N-terminus) with molar ratio 2:1 and 1:1; this interaction does not prevent the activation of prothrombin to thrombin. Interacts with NDUFAB1, a subunit of mitochondrial complex I. Interacts with FN1. As to quaternary structure, I-alpha-I plasma protease inhibitors are assembled from one or two heavy chains (HC) and one light chain, bikunin. Inter-alpha-inhibitor (I-alpha-I) is composed of ITIH1/HC1, ITIH2/HC2 and bikunin, and pre-alpha-inhibitor (P-alpha-I) of ITIH3/HC3 and bikunin. Interacts with TNFAIP6 (via Link domain). Monomer. Also occurs as a complex with tryptase in mast cells. The precursor is proteolytically processed into separately functioning proteins. Post-translationally, 3-hydroxykynurenine, an oxidized tryptophan metabolite that is common in biological fluids, reacts with Cys-53, Lys-111, Lys-137, and Lys-149 to form heterogeneous polycyclic chromophores including hydroxanthommatin. The reaction by alpha-1-microglobulin is autocatalytic; the human protein forms chromophore even when expressed in insect and bacterial cells. The chromophore can react with accessible cysteines forming non-reducible thioether cross-links with other molecules of alpha-1-microglobulin or with other proteins such as Ig alpha-1 chain C region 'Cys-352'. In terms of processing, heavy chains are interlinked with bikunin via a chondroitin 4-sulfate bridge to the C-terminal aspartate. Proteolytically cleaved by PRSS3 at Kunitz domain 2. As to expression, expressed by the liver and secreted in plasma.

It localises to the secreted. It is found in the endoplasmic reticulum. The protein resides in the cytoplasm. Its subcellular location is the cytosol. The protein localises to the cell membrane. It localises to the nucleus membrane. It is found in the mitochondrion inner membrane. The protein resides in the extracellular space. Its subcellular location is the extracellular matrix. Antioxidant and tissue repair protein with reductase, heme-binding and radical-scavenging activities. Removes and protects against harmful oxidants and repairs macromolecules in intravascular and extravascular spaces and in intracellular compartments. Intravascularly, plays a regulatory role in red cell homeostasis by preventing heme- and reactive oxygen species-induced cell damage. Binds and degrades free heme to protect fetal and adult red blood cells from hemolysis. Reduces extracellular methemoglobin, a Fe3+ (ferric) form of hemoglobin that cannot bind oxygen, back to the Fe2+ (ferrous) form deoxyhemoglobin, which has oxygen-carrying potential. Upon acute inflammation, inhibits oxidation of low-density lipoprotein particles by MPO and limits vascular damage. Extravascularly, protects from oxidation products formed on extracellular matrix structures and cell membranes. Catalyzes the reduction of carbonyl groups on oxidized collagen fibers and preserves cellular and extracellular matrix ultrastructures. Importantly, counteracts the oxidative damage at blood-placenta interface, preventing leakage of free fetal hemoglobin into the maternal circulation. Intracellularly, has a role in maintaining mitochondrial redox homeostasis. Bound to complex I of the respiratory chain of mitochondria, may scavenge free radicals and preserve mitochondrial ATP synthesis. Protects renal tubule epithelial cells from heme-induced oxidative damage to mitochondria. Reduces cytochrome c from Fe3+ (ferric) to the Fe2+ (ferrous) state through formation of superoxide anion radicals in the presence of ascorbate or NADH/NADPH electron donor cofactors, ascorbate being the preferred cofactor. Has a chaperone role in facilitating the correct folding of bikunin in the endoplasmic reticulum compartment. In terms of biological role, kunitz-type serine protease inhibitor and structural component of extracellular matrix with a role in extracellular space remodeling and cell adhesion. Among others, has antiprotease activity toward kallikrein, a protease involved in airway inflammation; inhibits GZMK/granzyme, a granule-stored serine protease involved in NK and T cell cytotoxic responses; and inhibits PLG/plasmin, a protease required for activation of matrix metalloproteinases. As part of I-alpha-I complex, provides for the heavy chains to be transferred from I-alpha-I complex to hyaluronan in the presence of TNFAIP6, in a dynamic process that releases free bikunin and remodels extracellular matrix proteoglycan structures. Free bikunin, but not its heavy chain-bound form, acts as a potent protease inhibitor in airway secretions. Part of hyaluronan-rich extracellular matrix that surrounds oocyte during cumulus oophorus expansion, an indispensable process for proper ovulation. Also inhibits calcium oxalate crystallization. Its function is as follows. Kunitz-type serine protease inhibitor. Has high catalytic efficiency for F10/blood coagulation factor Xa and may act as an anticoagulant by inhibiting prothrombin activation. Inhibits trypsin and mast cell CMA1/chymase and tryptase proteases. The chain is Protein AMBP (Ambp) from Rattus norvegicus (Rat).